A 232-amino-acid polypeptide reads, in one-letter code: MITQLQDYLAKTYGIHFNNPALLAEAFTQASYVNEHPHENLKYYERIEFLGDAVLQLFVSEYIYRRYPELPQGKLTRLRAAMVCEDSFSKFAKECHFDQYIRLGKGEEMAGARNRASLLCDIFESFIGALYLDQGRQAVEQFIQTVIFPKLDLGWFDHAVDAKTSLQEFLQRNGDVAIEYDLLSEGGTENDPVFEVEVTVDGKKVATGQGSSKKHAEMEAAKHALEKLRMDK.

One can recognise an RNase III domain in the interval Q6–G135. E48 provides a ligand contact to Mg(2+). Residue D52 is part of the active site. Residues D121 and E124 each coordinate Mg(2+). The active site involves E124. The region spanning D161–M230 is the DRBM domain.

This sequence belongs to the ribonuclease III family. Homodimer. Requires Mg(2+) as cofactor.

The protein resides in the cytoplasm. It catalyses the reaction Endonucleolytic cleavage to 5'-phosphomonoester.. Functionally, digests double-stranded RNA. Involved in the processing of primary rRNA transcript to yield the immediate precursors to the large and small rRNAs (23S and 16S). Processes some mRNAs, and tRNAs when they are encoded in the rRNA operon. Processes pre-crRNA and tracrRNA of type II CRISPR loci if present in the organism. In Limosilactobacillus fermentum (strain NBRC 3956 / LMG 18251) (Lactobacillus fermentum), this protein is Ribonuclease 3.